The sequence spans 233 residues: TATA-box-binding protein 1 (233 aa).

2 consecutive repeat copies span residues 58 to 134 (LQNI…ARIV) and 148 to 225 (IQNI…YPVL).

It belongs to the TBP family. As to quaternary structure, belongs to the TFIID complex together with the TBP-associated factors (TAFs). Binds DNA as monomer.

Its subcellular location is the nucleus. In terms of biological role, general transcription factor that functions at the core of the DNA-binding multiprotein factor TFIID. Binding of TFIID to the TATA box is the initial transcriptional step of the pre-initiation complex (PIC), playing a role in the activation of eukaryotic genes transcribed by RNA polymerase II. In Triticum aestivum (Wheat), this protein is TATA-box-binding protein 1 (TBP1).